Consider the following 428-residue polypeptide: Glutamate-1-semialdehyde 2,1-aminomutase (428 aa).

Lysine 267 carries the post-translational modification N6-(pyridoxal phosphate)lysine.

It belongs to the class-III pyridoxal-phosphate-dependent aminotransferase family. HemL subfamily. As to quaternary structure, homodimer. The cofactor is pyridoxal 5'-phosphate.

It localises to the cytoplasm. The enzyme catalyses (S)-4-amino-5-oxopentanoate = 5-aminolevulinate. It functions in the pathway porphyrin-containing compound metabolism; protoporphyrin-IX biosynthesis; 5-aminolevulinate from L-glutamyl-tRNA(Glu): step 2/2. In Desulforapulum autotrophicum (strain ATCC 43914 / DSM 3382 / VKM B-1955 / HRM2) (Desulfobacterium autotrophicum), this protein is Glutamate-1-semialdehyde 2,1-aminomutase.